Reading from the N-terminus, the 306-residue chain is tRNA dimethylallyltransferase (306 aa).

Position 9-16 (9-16) interacts with ATP; that stretch reads GPTAIGKT. A substrate-binding site is contributed by 11–16; sequence TAIGKT. The interaction with substrate tRNA stretch occupies residues 34–37; sequence DSMQ.

This sequence belongs to the IPP transferase family. In terms of assembly, monomer. Requires Mg(2+) as cofactor.

The catalysed reaction is adenosine(37) in tRNA + dimethylallyl diphosphate = N(6)-dimethylallyladenosine(37) in tRNA + diphosphate. Its function is as follows. Catalyzes the transfer of a dimethylallyl group onto the adenine at position 37 in tRNAs that read codons beginning with uridine, leading to the formation of N6-(dimethylallyl)adenosine (i(6)A). The protein is tRNA dimethylallyltransferase of Lactobacillus acidophilus (strain ATCC 700396 / NCK56 / N2 / NCFM).